The sequence spans 434 residues: Beta-enolase (434 aa).

At Ala2 the chain carries N-acetylalanine. Thr72 carries the post-translational modification Phosphothreonine. Residues Ser83 and Ser157 each carry the phosphoserine modification. Residues His158 and Glu167 each contribute to the substrate site. Ser176 carries the phosphoserine modification. A Phosphothreonine modification is found at Thr205. Residue Glu210 is the Proton donor of the active site. Residue Thr229 is modified to Phosphothreonine. Tyr236 is modified (phosphotyrosine). Residue Asp245 coordinates Mg(2+). A Phosphoserine modification is found at Ser263. Residues Glu293 and Asp318 each coordinate substrate. Mg(2+)-binding residues include Glu293 and Asp318. Residue Lys343 is the Proton acceptor of the active site. Substrate contacts are provided by residues 370-373 (SHRS) and Lys394.

It belongs to the enolase family. Mammalian enolase is composed of 3 isozyme subunits, alpha, beta and gamma, which can form homodimers or heterodimers which are cell-type and development-specific. Interacts with PNKD. The cofactor is Mg(2+). In terms of tissue distribution, the alpha/alpha homodimer is expressed in embryo and in most adult tissues. The alpha/beta heterodimer and the beta/beta homodimer are found in striated muscle, and the alpha/gamma heterodimer and the gamma/gamma homodimer in neurons.

The protein resides in the cytoplasm. The enzyme catalyses (2R)-2-phosphoglycerate = phosphoenolpyruvate + H2O. It functions in the pathway carbohydrate degradation; glycolysis; pyruvate from D-glyceraldehyde 3-phosphate: step 4/5. Its function is as follows. Glycolytic enzyme that catalyzes the conversion of 2-phosphoglycerate to phosphoenolpyruvate. Appears to have a function in striated muscle development and regeneration. The protein is Beta-enolase (ENO3) of Oryctolagus cuniculus (Rabbit).